The primary structure comprises 71 residues: Long neurotoxin 1 (71 aa).

5 disulfides stabilise this stretch: cysteine 3–cysteine 21, cysteine 14–cysteine 42, cysteine 27–cysteine 31, cysteine 46–cysteine 57, and cysteine 58–cysteine 63.

This sequence belongs to the three-finger toxin family. Long-chain subfamily. Type II alpha-neurotoxin sub-subfamily. In terms of tissue distribution, expressed by the venom gland.

The protein localises to the secreted. In terms of biological role, binds with high affinity to muscular (alpha-1/CHRNA1) and neuronal (alpha-7/CHRNA7) nicotinic acetylcholine receptor (nAChR) and inhibits acetylcholine from binding to the receptor, thereby impairing neuromuscular and neuronal transmission. The polypeptide is Long neurotoxin 1 (Naja melanoleuca (Forest cobra)).